A 350-amino-acid chain; its full sequence is Protein O-mannose kinase (350 aa).

N-acetylmethionine is present on methionine 1. The Cytoplasmic segment spans residues 1–20; the sequence is MEKQPQNKRRGLAPREVPPA. A helical; Signal-anchor for type II membrane protein transmembrane segment spans residues 21–43; it reads VGLLLIMALMNTLLYLCLDHFFI. Topologically, residues 44–350 are lumenal; that stretch reads APRQSIVDPR…AVMSQAREML (307 aa). Residues 81–350 form the Protein kinase domain; it reads VRQLKRVGEG…AVMSQAREML (270 aa). 3 N-linked (GlcNAc...) asparagine glycosylation sites follow: asparagine 165, asparagine 220, and asparagine 235.

The protein belongs to the protein kinase superfamily. Ser/Thr protein kinase family. STKL subfamily.

Its subcellular location is the endoplasmic reticulum membrane. The enzyme catalyses 3-O-[beta-D-GalNAc-(1-&gt;3)-beta-D-GlcNAc-(1-&gt;4)-alpha-D-Man]-L-Thr-[protein] + ATP = 3-O-[beta-D-GalNAc-(1-&gt;3)-beta-D-GlcNAc-(1-&gt;4)-(O-6-P-alpha-D-Man)]-Thr-[protein] + ADP + H(+). Functionally, protein O-mannose kinase that specifically mediates phosphorylation at the 6-position of an O-mannose of the trisaccharide (N-acetylgalactosamine (GalNAc)-beta-1,3-N-acetylglucosamine (GlcNAc)-beta-1,4-mannose) to generate phosphorylated O-mannosyl trisaccharide (N-acetylgalactosamine-beta-1,3-N-acetylglucosamine-beta-1,4-(phosphate-6-)mannose). Phosphorylated O-mannosyl trisaccharide is a carbohydrate structure present in alpha-dystroglycan (DAG1), which is required for binding laminin G-like domain-containing extracellular proteins with high affinity. Only shows kinase activity when the GalNAc-beta-3-GlcNAc-beta-terminus is linked to the 4-position of O-mannose, suggesting that this disaccharide serves as the substrate recognition motif. This is Protein O-mannose kinase (POMK) from Macaca fascicularis (Crab-eating macaque).